Consider the following 121-residue polypeptide: Small ribosomal subunit protein bS6m (121 aa).

Belongs to the bacterial ribosomal protein bS6 family. In terms of assembly, component of the mitochondrial ribosome small subunit (28S) which comprises a 12S rRNA and about 30 distinct proteins.

The protein resides in the mitochondrion. This chain is Small ribosomal subunit protein bS6m (MRPS6), found in Gallus gallus (Chicken).